The primary structure comprises 117 residues: Large ribosomal subunit protein bL20 (117 aa).

The protein belongs to the bacterial ribosomal protein bL20 family.

In terms of biological role, binds directly to 23S ribosomal RNA and is necessary for the in vitro assembly process of the 50S ribosomal subunit. It is not involved in the protein synthesizing functions of that subunit. This chain is Large ribosomal subunit protein bL20, found in Aliivibrio fischeri (strain ATCC 700601 / ES114) (Vibrio fischeri).